Reading from the N-terminus, the 123-residue chain is Small ribosomal subunit protein uS12cz/uS12cy (123 aa).

Belongs to the universal ribosomal protein uS12 family. As to quaternary structure, part of the 30S ribosomal subunit.

The protein localises to the plastid. The protein resides in the chloroplast. With S4 and S5 plays an important role in translational accuracy. Located at the interface of the 30S and 50S subunits. In Eucalyptus globulus subsp. globulus (Tasmanian blue gum), this protein is Small ribosomal subunit protein uS12cz/uS12cy (rps12-A).